Reading from the N-terminus, the 71-residue chain is UPF0346 protein BCQ_2236 (71 aa).

It belongs to the UPF0346 family.

The chain is UPF0346 protein BCQ_2236 from Bacillus cereus (strain Q1).